A 239-amino-acid polypeptide reads, in one-letter code: Protein GrpE (239 aa).

Disordered regions lie at residues 1-56 (MIEN…KNTI) and 208-239 (SMGPGKQNSQQEVEKDTVEEDVNSEVNTSEDV). Residues 40-53 (TSQKKEAINTEELK) show a composition bias toward basic and acidic residues. The span at 224–239 (TVEEDVNSEVNTSEDV) shows a compositional bias: acidic residues.

The protein belongs to the GrpE family. Homodimer.

The protein resides in the cytoplasm. Participates actively in the response to hyperosmotic and heat shock by preventing the aggregation of stress-denatured proteins, in association with DnaK and GrpE. It is the nucleotide exchange factor for DnaK and may function as a thermosensor. Unfolded proteins bind initially to DnaJ; upon interaction with the DnaJ-bound protein, DnaK hydrolyzes its bound ATP, resulting in the formation of a stable complex. GrpE releases ADP from DnaK; ATP binding to DnaK triggers the release of the substrate protein, thus completing the reaction cycle. Several rounds of ATP-dependent interactions between DnaJ, DnaK and GrpE are required for fully efficient folding. In Prochlorococcus marinus (strain MIT 9215), this protein is Protein GrpE.